We begin with the raw amino-acid sequence, 122 residues long: Large ribosomal subunit protein uL14 (122 aa).

The protein belongs to the universal ribosomal protein uL14 family. As to quaternary structure, part of the 50S ribosomal subunit. Forms a cluster with proteins L3 and L19. In the 70S ribosome, L14 and L19 interact and together make contacts with the 16S rRNA in bridges B5 and B8.

Its function is as follows. Binds to 23S rRNA. Forms part of two intersubunit bridges in the 70S ribosome. The chain is Large ribosomal subunit protein uL14 from Maricaulis maris (strain MCS10) (Caulobacter maris).